The sequence spans 92 residues: LYR motif-containing protein 4A (92 aa).

This sequence belongs to the complex I LYR family.

This chain is LYR motif-containing protein 4A (lyrm4a), found in Salmo salar (Atlantic salmon).